A 446-amino-acid chain; its full sequence is Packaging protein 1 (446 aa).

Residues 1-10 (METRGRRRAF) show a composition bias toward basic residues. The interval 1-74 (METRGRRRAF…PSQPPQPRSL (74 aa)) is disordered. Residue 170-177 (GPTGCGKS) coordinates ATP. The DNA-binding stretch occupies residues 439-446 (RAYRKRNK).

It belongs to the adenoviridae packaging protein 1 family. In terms of assembly, homodimer. Part of a genome packaging complex composed of packaging proteins 1, 2 and 3; this complex specifically binds to the packaging sequence on the left end of viral genomic DNA and performs packaging of the viral genome. Interacts with protein 33K.

The protein localises to the virion. It localises to the host nucleus. The protein resides in the host nucleoplasm. Its subcellular location is the host nucleolus. Its function is as follows. Component of the packaging machinery which encapsidates the viral DNA into preformed capsids and transcriptional activator of the viral major late promoter (MLP). Binds, along with packaging proteins 2 and 3, to the specific packaging sequence on the left end of viral genomic DNA and displays ATPase activity thereby providing the power stroke of the packaging machinery. The activity of packaging protein IVa2 is stimulated by protein 33K which acts as a terminase. May be the protein that pumps DNA into the capsid powered by ATP hydrolysis. Specifically binds to the 5'-CG-3' nucleotides of the repeats making up the packaging sequence. Component of the DEF-A and DEF-B transcription factors that bind downstream elements of the major late promoter (MLP), and stimulate transcription from the MLP after initiation of viral DNA replication. DEF-A is a heterodimer packaging proteins 1 and 2 and DEF-B is a homodimer of packaging protein 1. In Human adenovirus F serotype 40 (HAdV-40), this protein is Packaging protein 1.